The following is a 151-amino-acid chain: Small ribosomal subunit protein uS15 (151 aa).

The protein belongs to the universal ribosomal protein uS15 family.

This Candida maltosa (Yeast) protein is Small ribosomal subunit protein uS15 (RPS13).